A 154-amino-acid polypeptide reads, in one-letter code: Aspartate carbamoyltransferase regulatory chain (154 aa).

Residues Cys109, Cys114, Cys138, and Cys141 each contribute to the Zn(2+) site.

Belongs to the PyrI family. Contains catalytic and regulatory chains. It depends on Zn(2+) as a cofactor.

In terms of biological role, involved in allosteric regulation of aspartate carbamoyltransferase. The polypeptide is Aspartate carbamoyltransferase regulatory chain (Photobacterium profundum (strain SS9)).